A 416-amino-acid chain; its full sequence is Serine hydroxymethyltransferase (416 aa).

(6S)-5,6,7,8-tetrahydrofolate is bound by residues L121 and 125–127 (GHL). Position 229 is an N6-(pyridoxal phosphate)lysine (K229).

Belongs to the SHMT family. Homodimer. Pyridoxal 5'-phosphate is required as a cofactor.

It localises to the cytoplasm. It catalyses the reaction (6R)-5,10-methylene-5,6,7,8-tetrahydrofolate + glycine + H2O = (6S)-5,6,7,8-tetrahydrofolate + L-serine. The protein operates within one-carbon metabolism; tetrahydrofolate interconversion. It functions in the pathway amino-acid biosynthesis; glycine biosynthesis; glycine from L-serine: step 1/1. Functionally, catalyzes the reversible interconversion of serine and glycine with tetrahydrofolate (THF) serving as the one-carbon carrier. This reaction serves as the major source of one-carbon groups required for the biosynthesis of purines, thymidylate, methionine, and other important biomolecules. Also exhibits THF-independent aldolase activity toward beta-hydroxyamino acids, producing glycine and aldehydes, via a retro-aldol mechanism. This is Serine hydroxymethyltransferase from Neisseria gonorrhoeae.